A 764-amino-acid chain; its full sequence is DNA-binding protein SATB1 (764 aa).

The span at 1 to 15 (MDHLNEATQGKEHSE) shows a compositional bias: basic and acidic residues. Residues 1-56 (MDHLNEATQGKEHSEMSNNVSDPKGPPAKIARLEQNGSPLGRGRLGSTGGKMQGVP) are disordered. A Nuclear localization signal motif is present at residues 20 to 40 (VSDPKGPPAKIARLEQNGSPL). A compositionally biased stretch (gly residues) spans 43-52 (GRLGSTGGKM). Lysine 51 is covalently cross-linked (Glycyl lysine isopeptide (Lys-Gly) (interchain with G-Cter in SUMO2)). A CMP domain is found at 71 to 172 (GTMLPVFCVV…VVTLKIQLHS (102 aa)). At lysine 136 the chain carries N6-acetyllysine. The Protein interaction signature appears at 139 to 143 (PVPLS). In terms of domain architecture, CUTL spans 175-248 (KLEDLPPEQW…WYKHFKKTKD (74 aa)). Serine 185 bears the Phosphoserine mark. The tract at residues 224 to 278 (YYANVSAAKCQEFGRWYKHFKKTKDMMVEMDSLSELSQQGANHVNFGQQPVPGNT) is nuclear matrix targeting sequence (NMTS). A Nuclear matrix targeting sequence (NMTS) motif is present at residues 224–278 (YYANVSAAKCQEFGRWYKHFKKTKDMMVEMDSLSELSQQGANHVNFGQQPVPGNT). Polar residues predominate over residues 266–296 (HVNFGQQPVPGNTAEQPPSPAQLSHGSQPSV). The interval 266-307 (HVNFGQQPVPGNTAEQPPSPAQLSHGSQPSVRTPLPNLHPGL) is disordered. A DNA-binding region (CUT 1) is located at residues 361 to 448 (LEQQVSTNTE…ERDRIYQDER (88 aa)). Residues glutamine 390, 400-410 (RTQGLLSEILR), and asparagine 425 each bind DNA. Residues 450–474 (RSLNAASAMGPAPLLSTPPSRPPQV) are disordered. Residues 484–571 (NGKPENNTMN…ERDAIYEQES (88 aa)) constitute a DNA-binding region (CUT 2). The tract at residues 591 to 650 (QIQQQQQQQQQQQQQQQPPPPPPQPQPQPQAGPRLPPRQPTVASSAESDEENRQKTRPRT) is disordered. Residues 593–606 (QQQQQQQQQQQQQQ) show a composition bias toward low complexity. Positions 607–629 (QPPPPPPQPQPQPQAGPRLPPRQ) are enriched in pro residues. A Phosphoserine modification is found at serine 638. A DNA-binding region (homeobox) is located at residues 646–705 (TRPRTKISVEALGILQSFIQDVGLYPDEEAIQTLSAQLDLPKYTIIKFFQNQRYYLKHHG). A Glycyl lysine isopeptide (Lys-Gly) (interchain with G-Cter in SUMO) cross-link involves residue lysine 745.

Belongs to the CUT homeobox family. As to quaternary structure, interacts with PCAF. Interacts with sumoylated PML and HDAC1 Tat via the CMP domain. Also interacts with DYNLT3 and POLR2J2. Binds to EP300. Homodimer. Part of the nuclear protein complex gamma-globin promoter and enhancer binding factor (gamma-PE) composed at least of SATB1 and HOXB2. Interaction with CtBP1 when not acetylated stabilizes attachment to DNA and promotes transcription repression. Interacts with CUX1 (via DNA-binding domains); the interaction inhibits the attachment of both proteins to DNA. Sumoylated. Sumoylation promotes cleavage by caspases. In terms of processing, phosphorylated by PKC. Acetylated by PCAF. Phosphorylated form interacts with HDAC1, but unphosphorylated form interacts with PCAF. DNA binding properties are activated by phosphorylation and inactivated by acetylation. In opposition, gene expression is down-regulated by phosphorylation but up-regulated by acetylation. Post-translationally, cleaved at Asp-254 by caspase-3 and caspase-6 during T-cell apoptosis in thymus and during B-cell stimulation. The cleaved forms cannot dimerize and lose transcription regulation function because of impaired DNA and chromatin association. Expressed in the subventricular zone, rostral migratory stream and in the olfactory bulb (at protein level). Mainly expressed in thymus, spleen, and lymph nodes with a lower level observed in the brain.

The protein resides in the nucleus. Its subcellular location is the PML body. In terms of biological role, required for the switching of fetal globin species, and beta- and gamma-globin genes regulation during erythroid differentiation. Plays a role in chromatin organization and nuclear architecture during apoptosis. Crucial silencing factor contributing to the initiation of X inactivation mediated by Xist RNA that occurs during embryogenesis and in lymphoma. Binds to DNA at special AT-rich sequences, the consensus SATB1-binding sequence (CSBS), at nuclear matrix- or scaffold-associated regions. Thought to recognize the sugar-phosphate structure of double-stranded DNA. Transcriptional repressor controlling nuclear and viral gene expression in a phosphorylated and acetylated status-dependent manner, by binding to matrix attachment regions (MARs) of DNA and inducing a local chromatin-loop remodeling. Acts as a docking site for several chromatin remodeling enzymes and also by recruiting corepressors (HDACs) or coactivators (HATs) directly to promoters and enhancers. Modulates genes that are essential in the maturation of the immune T-cell CD8SP from thymocytes. Promotes neuronal differentiation of neural stem/progenitor cells in the adult subventricular zone, possibly by positively regulating the expression of NEUROD1. The polypeptide is DNA-binding protein SATB1 (Satb1) (Mus musculus (Mouse)).